Reading from the N-terminus, the 264-residue chain is MMDCTWTLPGMRATWQPAPFLPWDQTPWRVSFSWSPVLLAWGGVWSGEAHPCAHVLRPPASPCPPRPRRGCGDSGSSGMAQRAQAGSNQSRGKCGRDGRCPPRSSPGAPEAAERVESAETRGPGKSWILSPSSMSEPRRGKARRSPGRRRHPHSSFPQASSPSSPSRRETIPQVQSSGVPGAMSPEQTLFSRSPRGLSHLGQSLCRTVKESEAQRGKTMPPGSHSPSGAGQGRTARKGPAREEIPSSDSSAKPSVYPHPHLTAT.

The segment at 57–264 (RPPASPCPPR…VYPHPHLTAT (208 aa)) is disordered. Residues 140–153 (GKARRSPGRRRHPH) are compositionally biased toward basic residues. Positions 154–165 (SSFPQASSPSSP) are enriched in low complexity.

This is an uncharacterized protein from Homo sapiens (Human).